The sequence spans 286 residues: MKTFLILVLLAIVATTATTAVRFPVPQLQPQNPSQQQPQEQVPLVQQQQFLGQQQPFPPQQPYPQPQPFPSQLPYLQLQPFPQPQLPYSQPQPFRPQQPYPQPQPQYSQPQQPISQQQQQQQQQQQQQQQQQQILQQILQQQLIPCMDVVLQQHNIAHGRSQVLQQSTYQLLQELCCQHLWQIPEQSQCQAIHNVVHAIILHQQQKQQQQPSSQVSFQQPLQQYPLGQGSFRPSQQNPQAQGSVQPQQLPQFEEIRNLALQTLPAMCNVYIPPYCTIAPFGIFGTN.

The first 20 residues, 1 to 20 (MKTFLILVLLAIVATTATTA), serve as a signal peptide directing secretion. The tract at residues 51-120 (LGQQQPFPPQ…QQPISQQQQQ (70 aa)) is disordered. Positions 56–71 (PFPPQQPYPQPQPFPS) are enriched in pro residues. Low complexity predominate over residues 72–92 (QLPYLQLQPFPQPQLPYSQPQ). Pro residues predominate over residues 93–104 (PFRPQQPYPQPQ). The segment covering 105–120 (PQYSQPQQPISQQQQQ) has biased composition (low complexity).

This sequence belongs to the gliadin/glutenin family. Substrate of transglutaminase.

Gliadin is the major seed storage protein in wheat. In Triticum aestivum (Wheat), this protein is Alpha/beta-gliadin.